A 195-amino-acid chain; its full sequence is MAREATIARTTNETSIQLSFSLDGEGKAELETGVPFLTHMLDLFAKHGQFDLRVDAKGDTHIDDHHTTEDIGICLGQAIKEALGDKKGIKRYGNAFVPMDDALAQVVIDLSNRPHFEFRGEFPAAKVGTFDVELVYEFLWKLALEARMNLHVIVHYGRNTHHMIEAVFKALGRALDEATMVDPRVKGVPSTKGML.

This sequence belongs to the imidazoleglycerol-phosphate dehydratase family.

It is found in the cytoplasm. The enzyme catalyses D-erythro-1-(imidazol-4-yl)glycerol 3-phosphate = 3-(imidazol-4-yl)-2-oxopropyl phosphate + H2O. Its pathway is amino-acid biosynthesis; L-histidine biosynthesis; L-histidine from 5-phospho-alpha-D-ribose 1-diphosphate: step 6/9. This Geobacillus thermodenitrificans (strain NG80-2) protein is Imidazoleglycerol-phosphate dehydratase.